The primary structure comprises 99 residues: Plastocyanin (99 aa).

The Plastocyanin-like domain occupies 1–99 (VEVLLGASDG…AGMVGQVTVN (99 aa)). Positions 37, 84, 87, and 92 each coordinate Cu cation.

Belongs to the plastocyanin family. Requires Cu(2+) as cofactor.

It localises to the plastid. It is found in the chloroplast thylakoid membrane. Participates in electron transfer between P700 and the cytochrome b6-f complex in photosystem I. This chain is Plastocyanin (PETE), found in Vicia faba (Broad bean).